The primary structure comprises 93 residues: Large ribosomal subunit protein bL27 (93 aa).

A propeptide spanning residues 1-10 is cleaved from the precursor; the sequence is MLLKLQIQLF.

Belongs to the bacterial ribosomal protein bL27 family. In terms of processing, the N-terminus is cleaved by ribosomal processing cysteine protease Prp.

The sequence is that of Large ribosomal subunit protein bL27 from Phytoplasma australiense.